The following is a 533-amino-acid chain: Glucose-6-phosphate exchanger SLC37A1 (533 aa).

A helical membrane pass occupies residues 18-38 (QWYRAFIFILTFLLYASFHLS). N81 carries an N-linked (GlcNAc...) asparagine glycan. 4 helical membrane-spanning segments follow: residues 100–120 (GALDYSFLCAYAVGMYLSGII), 129–149 (YLTFGMLASGAFTALFGLGYF), 157–177 (FYVVTQVINGLVQTTGWPSVV), and 222–242 (SFVVPGAIVAAMGIVCFLFLI). Residue N263 is glycosylated (N-linked (GlcNAc...) asparagine). 7 consecutive transmembrane segments (helical) span residues 304-324 (VVILPGDGGSGTAAISFTGAL), 334-354 (LCLLFAKLVSYTFLFWLPLYI), 366-386 (GELSTLFDVGGIFGGILAGVI), 394-414 (ASTCGLMLLLAAPTLYIFSTV), 423-443 (IAMLLLSGALVSGPYTLITTA), 466-486 (AIIDGTGSVGAALGPLLAGLL), and 490-510 (GWSNVFYMLMFADACALLFLI).

It belongs to the major facilitator superfamily. Organophosphate:Pi antiporter (OPA) (TC 2.A.1.4) family. In terms of tissue distribution, expressed in numerous tissues, with highest expression in pancreas, kidney, bone marrow, spleen, liver, small intestine, as well as in fetal brain, liver and spleen.

The protein localises to the endoplasmic reticulum membrane. The catalysed reaction is D-glucose 6-phosphate(in) + phosphate(out) = D-glucose 6-phosphate(out) + phosphate(in). Inhibited by vanadate but not by chlorogenic acid. Functionally, inorganic phosphate and glucose-6-phosphate antiporter. May transport cytoplasmic glucose-6-phosphate into the lumen of the endoplasmic reticulum and translocate inorganic phosphate into the opposite direction. Independent of a lumenal glucose-6-phosphatase. May not play a role in homeostatic regulation of blood glucose levels. The polypeptide is Glucose-6-phosphate exchanger SLC37A1 (Homo sapiens (Human)).